Consider the following 427-residue polypeptide: Glutamate-1-semialdehyde 2,1-aminomutase (427 aa).

Residue lysine 265 is modified to N6-(pyridoxal phosphate)lysine.

It belongs to the class-III pyridoxal-phosphate-dependent aminotransferase family. HemL subfamily. In terms of assembly, homodimer. The cofactor is pyridoxal 5'-phosphate.

It localises to the cytoplasm. It carries out the reaction (S)-4-amino-5-oxopentanoate = 5-aminolevulinate. Its pathway is porphyrin-containing compound metabolism; protoporphyrin-IX biosynthesis; 5-aminolevulinate from L-glutamyl-tRNA(Glu): step 2/2. The polypeptide is Glutamate-1-semialdehyde 2,1-aminomutase (Pseudomonas entomophila (strain L48)).